Reading from the N-terminus, the 115-residue chain is Large ribosomal subunit protein uL18 (115 aa).

The protein belongs to the universal ribosomal protein uL18 family. In terms of assembly, part of the 50S ribosomal subunit; part of the 5S rRNA/L5/L18/L25 subcomplex. Contacts the 5S and 23S rRNAs.

Functionally, this is one of the proteins that bind and probably mediate the attachment of the 5S RNA into the large ribosomal subunit, where it forms part of the central protuberance. This chain is Large ribosomal subunit protein uL18, found in Baumannia cicadellinicola subsp. Homalodisca coagulata.